Consider the following 1036-residue polypeptide: Integrin alpha-9 (1036 aa).

The signal sequence occupies residues 1 to 28 (MGGPAAARTGAGGLRALLLALVAAGVPA). Residues 29–981 (GAYNLDAQRP…NLEPRGYVVG (953 aa)) lie on the Extracellular side of the membrane. FG-GAP repeat units follow at residues 36 to 97 (QRPV…PDRR), 109 to 175 (RGAP…AKGK), 183 to 233 (EYKK…NTYF), 234 to 290 (KLND…SGTL), 291 to 350 (IKIF…GALE), 352 to 409 (QLTL…GIVP), and 412 to 475 (SMKL…LPGS). 3 cysteine pairs are disulfide-bonded: Cys88–Cys98, Cys143–Cys163, and Cys180–Cys195. A glycan (N-linked (GlcNAc...) asparagine) is linked at Asn226. Asp313, Asn315, Asp317, Asp321, Asp374, Asp376, Asp378, Asp382, Asp436, Asp438, Asn440, and Asp444 together coordinate Ca(2+). An intrachain disulfide couples Cys483 to Cys492. 2 N-linked (GlcNAc...) asparagine glycosylation sites follow: Asn494 and Asn515. 3 disulfides stabilise this stretch: Cys498/Cys556, Cys621/Cys626, and Cys697/Cys707. Asn808 carries an N-linked (GlcNAc...) asparagine glycan. Cystine bridges form between Cys856-Cys892 and Cys899-Cys904. Residues 982–1002 (WIIAISLLVGILIFLLLAVLL) traverse the membrane as a helical segment. Topologically, residues 1003–1036 (WKMGFFRRRYKEIIEAEKNRKENEDGWDWVQKNQ) are cytoplasmic. Residues 1006 to 1010 (GFFRR) carry the GFFKR motif motif.

The protein belongs to the integrin alpha chain family. Heterodimer of an alpha and a beta subunit. Alpha-9 (ITGA9) associates with beta-1 (ITGB1). Integrin ITGA9:ITGB1 interacts with FBLN5 (via N-terminus). Integrin ITGA9:ITGB1 interacts with SPP1/OPN (via N-terminus). Integrin ITGA9:ITGB1 interacts with TNC/TNFN3 (via the 3rd Fibronectin type-III domain). Integrin ITGA9:ITGB1 interacts with SVEP1/polydom (via Sushi domain 21); thereby inhibits Ca(2+) intracellular signaling and as a result represses vasocontraction. As to expression, expressed in the media layer of the arterial wall (at protein level). Expressed in the airway epithelium, skeletal muscle, basal keratincytes, the basal epithelium of the cornea, hepatocytes, giant cells in the spleen and smooth muscle of the stomach, duodenum and veins (at protein level).

It is found in the membrane. In terms of biological role, integrin alpha-9/beta-1 (ITGA9:ITGB1) is a receptor for VCAM1, cytotactin and osteopontin. It recognizes the sequence A-E-I-D-G-I-E-L in cytotactin. ITGA9:ITGB1 may play a crucial role in SVEP1/polydom-mediated myoblast cell adhesion. Integrin ITGA9:ITGB1 represses PRKCA-mediated L-type voltage-gated channel Ca(2+) influx and ROCK-mediated calcium sensitivity in vascular smooth muscle cells via its interaction with SVEP1, thereby inhibiting vasocontraction. The polypeptide is Integrin alpha-9 (Mus musculus (Mouse)).